Consider the following 151-residue polypeptide: Brain ribonuclease (151 aa).

Residues 1 to 25 (KESAAAKFRRQHMDAGSSSSGNSNY) form a disordered region. Substrate-binding residues include K7 and R10. The active-site Proton acceptor is the H12. 4 cysteine pairs are disulfide-bonded: C26-C84, C40-C95, C58-C110, and C65-C72. 41-45 (KPVNT) provides a ligand contact to substrate. The N-linked (GlcNAc...) asparagine glycan is linked to N62. Residues K66 and R85 each contribute to the substrate site. The active-site Proton donor is the H119. The O-linked (GalNAc...) threonine glycan is linked to T129. S133 carries an O-linked (GalNAc...) serine glycan.

Belongs to the pancreatic ribonuclease family.

The protein resides in the secreted. The sequence is that of Brain ribonuclease (BRN) from Axis porcinus (Hog deer).